A 60-amino-acid chain; its full sequence is Large ribosomal subunit protein bL33 (60 aa).

Belongs to the bacterial ribosomal protein bL33 family.

The polypeptide is Large ribosomal subunit protein bL33 (Flavobacterium johnsoniae (strain ATCC 17061 / DSM 2064 / JCM 8514 / BCRC 14874 / CCUG 350202 / NBRC 14942 / NCIMB 11054 / UW101) (Cytophaga johnsonae)).